Consider the following 623-residue polypeptide: Indolepyruvate oxidoreductase subunit IorA (623 aa).

[4Fe-4S] cluster is bound by residues cysteine 573, cysteine 576, cysteine 579, cysteine 585, cysteine 602, cysteine 605, cysteine 608, and cysteine 612. Residues glutamate 593–serine 622 form the 4Fe-4S ferredoxin-type domain.

Heterodimer of the IorA and IorB subunits. The cofactor is [4Fe-4S] cluster.

The enzyme catalyses indole-3-pyruvate + 2 oxidized [2Fe-2S]-[ferredoxin] + CoA = (indol-3-yl)acetyl-CoA + 2 reduced [2Fe-2S]-[ferredoxin] + CO2 + H(+). In terms of biological role, catalyzes the ferredoxin-dependent oxidative decarboxylation of arylpyruvates. The polypeptide is Indolepyruvate oxidoreductase subunit IorA (iorA) (Archaeoglobus fulgidus (strain ATCC 49558 / DSM 4304 / JCM 9628 / NBRC 100126 / VC-16)).